The chain runs to 175 residues: 2-oxo-4-hydroxy-4-carboxy-5-ureidoimidazoline decarboxylase (175 aa).

Residue His-67 is the Proton donor of the active site. Substrate contacts are provided by residues Pro-68, 84-88, and 119-123; these read SRGEQ and FVICA. A Microbody targeting signal motif is present at residues 173 to 175; sequence TKL.

The protein belongs to the OHCU decarboxylase family. Homodimer.

The protein localises to the peroxisome. The enzyme catalyses 5-hydroxy-2-oxo-4-ureido-2,5-dihydro-1H-imidazole-5-carboxylate + H(+) = (S)-allantoin + CO2. It participates in purine metabolism; urate degradation; (S)-allantoin from urate: step 3/3. Its function is as follows. Catalyzes the stereoselective decarboxylation of 2-oxo-4-hydroxy-4-carboxy-5-ureidoimidazoline (OHCU) to (S)-allantoin. This is 2-oxo-4-hydroxy-4-carboxy-5-ureidoimidazoline decarboxylase (urad) from Amia calva (Bowfin).